Consider the following 291-residue polypeptide: 4-hydroxy-tetrahydrodipicolinate synthase (291 aa).

Threonine 44 lines the pyruvate pocket. The Proton donor/acceptor role is filled by tyrosine 132. The active-site Schiff-base intermediate with substrate is lysine 160. Pyruvate is bound at residue valine 202.

The protein belongs to the DapA family. As to quaternary structure, homotetramer; dimer of dimers.

It localises to the cytoplasm. It catalyses the reaction L-aspartate 4-semialdehyde + pyruvate = (2S,4S)-4-hydroxy-2,3,4,5-tetrahydrodipicolinate + H2O + H(+). It participates in amino-acid biosynthesis; L-lysine biosynthesis via DAP pathway; (S)-tetrahydrodipicolinate from L-aspartate: step 3/4. Catalyzes the condensation of (S)-aspartate-beta-semialdehyde [(S)-ASA] and pyruvate to 4-hydroxy-tetrahydrodipicolinate (HTPA). This is 4-hydroxy-tetrahydrodipicolinate synthase from Clostridium perfringens (strain ATCC 13124 / DSM 756 / JCM 1290 / NCIMB 6125 / NCTC 8237 / Type A).